We begin with the raw amino-acid sequence, 353 residues long: Alternative oxidase, mitochondrial (353 aa).

Residues 25–45 (FRSTDDEDENNPSTELATDTT) are disordered. Polar residues predominate over residues 35–45 (NPSTELATDTT). The helical transmembrane segment at 153-173 (FLFLESIAGVPGMVAGMIRHL) threads the bilayer. Fe cation contacts are provided by E157, E196, and H199. The helical transmembrane segment at 217-237 (LLIGQIIFYNLFFISYLISPA) threads the bilayer. Residues E247, E301, and H304 each coordinate Fe cation.

It belongs to the alternative oxidase family. It depends on Fe cation as a cofactor.

The protein resides in the mitochondrion inner membrane. In terms of biological role, catalyzes cyanide-resistant oxygen consumption. May increase respiration when the cytochrome respiratory pathway is restricted, or in response to low temperatures. The sequence is that of Alternative oxidase, mitochondrial (AOX) from Yarrowia lipolytica (strain CLIB 122 / E 150) (Yeast).